The chain runs to 434 residues: Putative MgpC-like protein MPN_149 (434 aa).

2 disordered regions span residues 168–193 (GSGQESSWNSQRSQKVLKNNPGPKAV) and 215–267 (EPLD…DNNG). A compositionally biased stretch (polar residues) spans 170–184 (GQESSWNSQRSQKVL). Residues 218-229 (DSTKDGKGKDES) are compositionally biased toward basic and acidic residues. Positions 248-267 (STGSQMAAVTDSQQSGDNNG) are enriched in polar residues.

It belongs to the MgpC family.

This Mycoplasma pneumoniae (strain ATCC 29342 / M129 / Subtype 1) (Mycoplasmoides pneumoniae) protein is Putative MgpC-like protein MPN_149.